A 1499-amino-acid polypeptide reads, in one-letter code: Multidrug resistance protein CDR2 (1499 aa).

Topologically, residues 1–511 (MSTANTSLSQ…NFLRMKGDPS (511 aa)) are cytoplasmic. The 255-residue stretch at 148–402 (FTTEAINKLK…FENMGWKCPQ (255 aa)) folds into the ABC transporter 1 domain. 6 helical membrane-spanning segments follow: residues 512 to 532 (IPLI…SVFF), 546 to 566 (GALF…ILSL), 596 to 616 (LPVK…MVNL), 621 to 641 (GNFF…SHMF), 660 to 680 (VFLL…YILG), and 763 to 783 (FGIT…LTEF). At 784–1193 (NKGAMQKGEI…TIVQDWRSPG (410 aa)) the chain is on the cytoplasmic side. Residues 857-1101 (FFWRDLTYQV…MINYFEKYGA (245 aa)) enclose the ABC transporter 2 domain. 893–900 (GASGAGKT) serves as a coordination point for ATP. 6 helical membrane-spanning segments follow: residues 1194 to 1214 (YIYS…FSFF), 1229 to 1249 (AVFM…PYFV), 1279 to 1299 (IPFQ…PVGL), 1315 to 1335 (LMWM…QLAI), 1354 to 1374 (LCLM…FWIF), and 1465 to 1485 (FGIF…FYWL).

This sequence belongs to the ABC transporter superfamily. ABCG family. PDR (TC 3.A.1.205) subfamily.

It localises to the membrane. Multidrug efflux transporter. Confers resistance to azole antifungal agents, to other antifungals (terbinafine, amorolfine) and to a variety of metabolic inhibitors. The sequence is that of Multidrug resistance protein CDR2 (CDR2) from Candida albicans (strain SC5314 / ATCC MYA-2876) (Yeast).